We begin with the raw amino-acid sequence, 474 residues long: MSPGLCFLKEISVIQATPKPTTRSFANCCKMGILQHLMHILDIPGFPWKIVIAGFSIGKYAWDLYLRRRQVPYLLREKPPAILAEHVDEKKYQKALSYARDKSWFSTIVSTFTLAVDLLIIKYDGLSYLWNITKFPWMDKLAASSSRFSLSTSITHSCVFMFGLTLFSRLIQIPFNLYSTFVIEEKYGFNKSTLKIFVIDLLKELSLGGLLMSVVVGVFVKILTKFGDNFIMYAWGAYIVFGLILQTIAPSLIMPLFYKFTPLENGSLRTQIEELAASINFPLKKLYVIDASRRSTHSNAFFYGLPWNKGIVLFDTLVKNHTEPELIAILGHELGHWYMSHNLINTIIDYGMSLFHLFLFAAFIRNNSLYTSFNFITEKPVIVGLLLFSDALGPLSSILTFASNKVSRLCEYQADAFAKQLGYAKDLGDGLIRIHDDNLSPLEFDSLYTSYYHSHPILVDRLNAIDYTTLKKNN.

3 consecutive transmembrane segments (helical) span residues 103–123, 196–216, and 230–250; these read SWFS…IIKY, IFVI…SVVV, and FIMY…TIAP. Histidine 332 contacts Zn(2+). Glutamate 333 is a catalytic residue. Histidine 336 contacts Zn(2+). The next 2 membrane-spanning stretches (helical) occupy residues 344-364 and 381-401; these read INTI…AAFI and VIVG…ILTF. Glutamate 411 contacts Zn(2+). Aspartate 415 acts as the Proton donor in catalysis.

This sequence belongs to the peptidase M48A family. Zn(2+) serves as cofactor.

The protein localises to the endoplasmic reticulum membrane. It catalyses the reaction Hydrolyzes the peptide bond -P2-(S-farnesyl or geranylgeranyl)C-P1'-P2'-P3'-COOH where P1' and P2' are amino acids with aliphatic side chains and P3' is any C-terminal residue.. In terms of biological role, proteolytically removes the C-terminal three residues of farnesylated proteins. This Schizosaccharomyces pombe (strain 972 / ATCC 24843) (Fission yeast) protein is Probable CAAX prenyl protease 1.